A 360-amino-acid polypeptide reads, in one-letter code: MERVYNFSAGPSILPLPVLEKVQKELLNYNGTGMSIMEMSHRSSYFQSIIEEASNLLRELMSIPDEYEVLFLQGGASLQFSMIPLNLMNTYKKAGYVLTGSWSKKALQEAEKVGEVQVIASSEQEKFTTIPKLDGLLSDEKLDYVHITTNNTIEGTKYVDIPHVEKVPLVADMSSNILSERYDVSKFGLIYAGAQKNLGPAGLTIAIIKRDLIGEADRSCPTMLNYETYSKNNSLYNTPPSFSIYVTKLVLEWLKEQGGVSAIEEQNRMKSSLLYNFLDESKLFTSPVDPTYRSLMNIPFTTPSEELNSEFLQKAKERGLVTLKGHRSVGGMRASIYNAMPVQGVQQLVNYMKEFELENR.

Position 42 (arginine 42) interacts with L-glutamate. Pyridoxal 5'-phosphate contacts are provided by residues 76 to 77 (AS), tryptophan 102, threonine 152, aspartate 172, and glutamine 195. Residue lysine 196 is modified to N6-(pyridoxal phosphate)lysine. Position 237 to 238 (237 to 238 (NT)) interacts with pyridoxal 5'-phosphate.

The protein belongs to the class-V pyridoxal-phosphate-dependent aminotransferase family. SerC subfamily. Homodimer. Pyridoxal 5'-phosphate serves as cofactor.

The protein resides in the cytoplasm. It carries out the reaction O-phospho-L-serine + 2-oxoglutarate = 3-phosphooxypyruvate + L-glutamate. The enzyme catalyses 4-(phosphooxy)-L-threonine + 2-oxoglutarate = (R)-3-hydroxy-2-oxo-4-phosphooxybutanoate + L-glutamate. It participates in amino-acid biosynthesis; L-serine biosynthesis; L-serine from 3-phospho-D-glycerate: step 2/3. Functionally, catalyzes the reversible conversion of 3-phosphohydroxypyruvate to phosphoserine and of 3-hydroxy-2-oxo-4-phosphonooxybutanoate to phosphohydroxythreonine. The polypeptide is Phosphoserine aminotransferase (Bacillus cereus (strain ATCC 14579 / DSM 31 / CCUG 7414 / JCM 2152 / NBRC 15305 / NCIMB 9373 / NCTC 2599 / NRRL B-3711)).